We begin with the raw amino-acid sequence, 83 residues long: Putative potassium channel toxin Ts20 (83 aa).

The first 18 residues, 1–18 (MKLDIVLIMFVTFSTTLA), serve as a signal peptide directing secretion.

Post-translationally, contains 3 disulfide bonds. Expressed by the venom gland.

Its subcellular location is the secreted. Functionally, reversibly inhibits potassium channels. The chain is Putative potassium channel toxin Ts20 from Tityus serrulatus (Brazilian scorpion).